A 729-amino-acid chain; its full sequence is Translation initiation factor IF-2 (729 aa).

The disordered stretch occupies residues 20-141 (QFAGGGRGPG…TTTVRAPVRP (122 aa)). Residues 22 to 91 (AGGGRGPGNP…PGGGRGGGRG (70 aa)) are compositionally biased toward gly residues. Residues 92–108 (GDGRRRDESFVENEGGR) show a composition bias toward basic and acidic residues. The span at 112-127 (SGRTTSTATTARTPGG) shows a compositional bias: low complexity. Positions 229–396 (PRPPVVTIMG…IILLVADLNE (168 aa)) constitute a tr-type G domain. Residues 238-245 (GHVDHGKT) are G1. GTP is bound at residue 238–245 (GHVDHGKT). Positions 263 to 267 (GITQH) are G2. The segment at 284–287 (DTPG) is G3. Residues 284–288 (DTPGH) and 338–341 (NKID) contribute to the GTP site. The tract at residues 338 to 341 (NKID) is G4. The segment at 374-376 (SAK) is G5.

This sequence belongs to the TRAFAC class translation factor GTPase superfamily. Classic translation factor GTPase family. IF-2 subfamily.

The protein localises to the cytoplasm. Functionally, one of the essential components for the initiation of protein synthesis. Protects formylmethionyl-tRNA from spontaneous hydrolysis and promotes its binding to the 30S ribosomal subunits. Also involved in the hydrolysis of GTP during the formation of the 70S ribosomal complex. This is Translation initiation factor IF-2 from Roseiflexus sp. (strain RS-1).